We begin with the raw amino-acid sequence, 478 residues long: Ankyrin repeat and BTB/POZ domain-containing protein 1 (478 aa).

ANK repeat units follow at residues 1-31 (MDTS…EVNV) and 35-64 (WDST…RCEA). 2 consecutive BTB domains span residues 115-182 (SDVV…DIGV) and 272-346 (PDIC…ELSP). Residues 451-477 (VQTYSAIEEAQQRLRALEDLLVSIGLD) adopt a coiled-coil conformation.

In terms of tissue distribution, ubiquitously expressed in all fetal tissues examined including heart, brain, liver, and kidney. Also expressed at lower levels in both adult heart and hypertrophic heart.

The protein resides in the cytoplasm. Functionally, may act as a mediator of the PTEN growth-suppressive signaling pathway. May play a role in developmental processes. In Homo sapiens (Human), this protein is Ankyrin repeat and BTB/POZ domain-containing protein 1.